The chain runs to 308 residues: uncharacterized protein (308 aa).

Polar residues-rich tracts occupy residues 138–148 and 205–229; these read WSFTKHGSNTP and STSHLNHPSTSNSPDPLYSASQPPS. Disordered stretches follow at residues 138 to 157 and 205 to 235; these read WSFTKHGSNTPSDSSSPLCN and STSHLNHPSTSNSPDPLYSASQPPSIKTDAS.

It is found in the cytoplasm. This is an uncharacterized protein from Schizosaccharomyces pombe (strain 972 / ATCC 24843) (Fission yeast).